Here is a 462-residue protein sequence, read N- to C-terminus: Asparagine--tRNA ligase (462 aa).

The protein belongs to the class-II aminoacyl-tRNA synthetase family. As to quaternary structure, homodimer.

The protein resides in the cytoplasm. The catalysed reaction is tRNA(Asn) + L-asparagine + ATP = L-asparaginyl-tRNA(Asn) + AMP + diphosphate + H(+). In Borreliella afzelii (strain PKo) (Borrelia afzelii), this protein is Asparagine--tRNA ligase.